The sequence spans 549 residues: Pyrophosphate--fructose 6-phosphate 1-phosphotransferase (549 aa).

A diphosphate-binding site is contributed by Gly-78. Asp-172 lines the Mg(2+) pocket. Residues 200 to 202, 239 to 240, 247 to 249, Glu-308, and 421 to 424 contribute to the substrate site; these read TID, KY, MGR, and YEGR. Asp-202 (proton acceptor) is an active-site residue.

This sequence belongs to the phosphofructokinase type A (PFKA) family. PPi-dependent PFK group II subfamily. Clade 'Long' sub-subfamily. As to quaternary structure, homodimer. Mg(2+) serves as cofactor.

The protein resides in the cytoplasm. The catalysed reaction is beta-D-fructose 6-phosphate + diphosphate = beta-D-fructose 1,6-bisphosphate + phosphate + H(+). Its pathway is carbohydrate degradation; glycolysis; D-glyceraldehyde 3-phosphate and glycerone phosphate from D-glucose: step 3/4. With respect to regulation, non-allosteric. Its function is as follows. Catalyzes the phosphorylation of D-fructose 6-phosphate, the first committing step of glycolysis. Uses inorganic phosphate (PPi) as phosphoryl donor instead of ATP like common ATP-dependent phosphofructokinases (ATP-PFKs), which renders the reaction reversible, and can thus function both in glycolysis and gluconeogenesis. Consistently, PPi-PFK can replace the enzymes of both the forward (ATP-PFK) and reverse (fructose-bisphosphatase (FBPase)) reactions. This is Pyrophosphate--fructose 6-phosphate 1-phosphotransferase from Porphyromonas gingivalis (Bacteroides gingivalis).